The sequence spans 339 residues: Putative phosphate acyltransferase (339 aa).

This sequence belongs to the PlsX family. Homodimer. Probably interacts with PlsY.

The protein localises to the cytoplasm. It carries out the reaction a fatty acyl-[ACP] + phosphate = an acyl phosphate + holo-[ACP]. It functions in the pathway lipid metabolism; phospholipid metabolism. Its function is as follows. Catalyzes the reversible formation of acyl-phosphate (acyl-PO(4)) from acyl-[acyl-carrier-protein] (acyl-ACP). This enzyme utilizes acyl-ACP as fatty acyl donor, but not acyl-CoA. The sequence is that of Putative phosphate acyltransferase from Clostridium perfringens (strain 13 / Type A).